A 95-amino-acid polypeptide reads, in one-letter code: Protein IDA-LIKE 2 (95 aa).

A signal peptide spans 1 to 35 (MSSRNQRSRITSSFFVSFFTRTILLLLILLLGFCN). The disordered stretch occupies residues 75 to 95 (ASGPSRKHNDIGLLSWHRSSP).

As to expression, expressed in leaves, buds, flowers, seedlings and seeds. Detected at the base of pedicel, in the floral and funicule abscission zones and in vascular tissues.

The protein resides in the secreted. It localises to the extracellular space. Functionally, may be involved in floral abscission. The polypeptide is Protein IDA-LIKE 2 (IDL2) (Arabidopsis thaliana (Mouse-ear cress)).